The sequence spans 103 residues: ATP-dependent Clp protease adapter protein ClpS (103 aa).

This sequence belongs to the ClpS family. Binds to the N-terminal domain of the chaperone ClpA.

In terms of biological role, involved in the modulation of the specificity of the ClpAP-mediated ATP-dependent protein degradation. This chain is ATP-dependent Clp protease adapter protein ClpS, found in Neisseria meningitidis serogroup A / serotype 4A (strain DSM 15465 / Z2491).